Here is a 1255-residue protein sequence, read N- to C-terminus: Protein diaphanous homolog 1 (1255 aa).

M1 is modified (N-acetylmethionine). A compositionally biased stretch (gly residues) spans 1 to 12 (MEPSGGGLGPGR). Residues 1–73 (MEPSGGGLGP…ASYGDDPTAQ (73 aa)) are disordered. S22 bears the Phosphoserine mark. Over residues 58-73 (AHRNSSASYGDDPTAQ) the composition is skewed to polar residues. The 366-residue stretch at 75–440 (LQDISDEQVL…QIVLHKNGTD (366 aa)) folds into the GBD/FH3 domain. Residues 460-562 (IDKTKVEKSE…MASLSAVVVA (103 aa)) are a coiled coil. Positions 567–737 (SSAAVPPAPP…MGVPPPPPFG (171 aa)) are disordered. A compositionally biased stretch (pro residues) spans 585–736 (IPPPPPPPPL…GMGVPPPPPF (152 aa)). Positions 586 to 747 (PPPPPPPPLP…FGVPAAPVLP (162 aa)) constitute an FH1 domain. The residue at position 751 (T751) is a Phosphothreonine. An FH2 domain is found at 752 to 1154 (PKKVYKPEVQ…MRRAKLAKEK (403 aa)). Residues 1027–1179 (VEKASRVSAE…IDMNAEGDET (153 aa)) adopt a coiled-coil conformation. Residues K1040 and K1086 each carry the N6-acetyllysine modification. A Phosphotyrosine modification is found at Y1104. Residues 1177 to 1205 (DETGVMDSLLEALQSGAAFRRKRGPRQVN) form the DAD domain. A Phosphoserine modification is found at S1237.

Belongs to the formin homology family. Diaphanous subfamily. Homodimer. Interacts with the GTP-bound form of RHOA. Interacts with RHOC, PFY1, MAPRE1, BAIAP2 and APC. Interacts with APC; acts as a scaffold protein for MAPRE1 and APC to stabilize microtubules and promote cell migration. Interacts with SCAI. Interacts with DCAF7, via FH2 domain. Interacts with NCDN. Interacts with OSBPL10, OSBPL2, VIM, TUBB and DYN1. Phosphorylation at Thr-751 is stimulated by cAMP and regulates stability, complex formation and mitochondrial movement. In terms of tissue distribution, widely expressed. In the organ of Corti, it is expressed at the outer and inner hair cell layers. Expression at the inner hair cell layer is restricted to inner pillar cells. Detected in cochlear spiral ganglion neurons.

Its subcellular location is the cell membrane. The protein localises to the cell projection. The protein resides in the ruffle membrane. It is found in the cytoplasm. It localises to the cytoskeleton. Its subcellular location is the microtubule organizing center. The protein localises to the centrosome. The protein resides in the spindle. It is found in the nucleus. Functionally, actin nucleation and elongation factor required for the assembly of F-actin structures, such as actin cables and stress fibers. Binds to the barbed end of the actin filament and slows down actin polymerization and depolymerization. Required for cytokinesis, and transcriptional activation of the serum response factor. DFR proteins couple Rho and Src tyrosine kinase during signaling and the regulation of actin dynamics. Functions as a scaffold protein for MAPRE1 and APC to stabilize microtubules and promote cell migration. Has neurite outgrowth promoting activity. Acts in a Rho-dependent manner to recruit PFY1 to the membrane. The MEMO1-RHOA-DIAPH1 signaling pathway plays an important role in ERBB2-dependent stabilization of microtubules at the cell cortex. It controls the localization of APC and CLASP2 to the cell membrane, via the regulation of GSK3B activity. In turn, membrane-bound APC allows the localization of the MACF1 to the cell membrane, which is required for microtubule capture and stabilization. Plays a role in the regulation of cell morphology and cytoskeletal organization. Required in the control of cell shape. Also acts as an actin nucleation and elongation factor in the nucleus by promoting nuclear actin polymerization inside the nucleus to drive serum-dependent SRF-MRTFA activity. In Mus musculus (Mouse), this protein is Protein diaphanous homolog 1 (Diaph1).